Reading from the N-terminus, the 298-residue chain is Protease HtpX homolog (298 aa).

2 helical membrane passes run 15-35 (LIMVLFVVILTLVGAGLGYLF) and 38-58 (SPWTGIIIALAGSLIYLLIMW). Residue His143 coordinates Zn(2+). Glu144 is an active-site residue. His147 is a Zn(2+) binding site. A run of 2 helical transmembrane segments spans residues 153–173 (ILLSTIGVVLVGVISFISGIA) and 197–217 (IIFKVIAIVFVLILGPISASL). Zn(2+) is bound at residue Glu227.

The protein belongs to the peptidase M48B family. Zn(2+) serves as cofactor.

Its subcellular location is the cell membrane. The chain is Protease HtpX homolog from Lactobacillus acidophilus (strain ATCC 700396 / NCK56 / N2 / NCFM).